Here is a 233-residue protein sequence, read N- to C-terminus: Flagellar calcium-binding protein TB-17 (233 aa).

Over residues 1 to 11 the composition is skewed to polar residues; sequence MGCSGSKNASN. Residues 1 to 29 are disordered; that stretch reads MGCSGSKNASNPKDGAASKGGKDGKTTAD. A compositionally biased stretch (basic and acidic residues) spans 20-29; it reads GGKDGKTTAD. 3 EF-hand domains span residues 48–83, 130–165, and 167–202; these read ESKSRRIELFKQFDTNGTGKLGFREVLDGCYSILKL, YDIFELTVIFDTMDKDGSLLLELHEFKEALPKLKEW, and VDITDATTVFNEIDTNGSGVVTFDEFSCWAVTKKLQ. Positions 61, 63, 65, 67, 72, 143, 145, 147, 154, 180, 182, 184, and 191 each coordinate Ca(2+). Positions 203 to 233 are disordered; it reads VSGDPDDEENGANEGDGANAGDGVPAAEGSA. Residues 214 to 225 are compositionally biased toward low complexity; sequence ANEGDGANAGDG.

The protein belongs to the calflagin family.

Its subcellular location is the cell projection. It localises to the cilium. The protein resides in the flagellum. May contribute to the rapid motility of the trypanosomes, playing a role either in flagellar structure or in calcium metabolism. Could alternate between a GDP-bound inactive form to a calcium/GTP-bound active form. The chain is Flagellar calcium-binding protein TB-17 (FCABP) from Trypanosoma brucei brucei.